The primary structure comprises 471 residues: MTASTATETLLHKGSGLQVVVGLGQSGLSVAHYLAEQGYQVAVTDNQENPALANKLPATIDIRQFGAIDAELLQQAARIIISPGISLDNVAIAAARAANIPVVSDIQLFCEACTVPIVAITGSNAKSTVTTLVGQMAADAGINVGVGGNIGVPALSLLSNKEMELAVIELSSFQLETVTNLGAQVATVLNMSPDHLDRHGDMLGYHQAKHRIFQGAKSVVINREDALTRPLVSDSLPRLSTGIHAPNKGHYGLITDTAGQTYLARGTERLISADKLKIKGRHNLLNAQAALALGELAGLPLEIMLITLQQFAGLEHRCQYVSTVAGIDYFNDSKGTNIGSTMAAVEGLGAVYAPKDGKLLLILGGQGKGQQFGELSPFINQYVSQVLFIGEDGKQIEQHLRAAGLSDEVSLHQCQTLENAFATIEQVTASSLSQVQAVLLSPACASFDQFDGFVARGEHFSQLVKQLDVVS.

ATP is bound at residue 122-128; sequence GSNAKST.

Belongs to the MurCDEF family.

The protein resides in the cytoplasm. The catalysed reaction is UDP-N-acetyl-alpha-D-muramoyl-L-alanine + D-glutamate + ATP = UDP-N-acetyl-alpha-D-muramoyl-L-alanyl-D-glutamate + ADP + phosphate + H(+). It participates in cell wall biogenesis; peptidoglycan biosynthesis. Functionally, cell wall formation. Catalyzes the addition of glutamate to the nucleotide precursor UDP-N-acetylmuramoyl-L-alanine (UMA). In Psychrobacter cryohalolentis (strain ATCC BAA-1226 / DSM 17306 / VKM B-2378 / K5), this protein is UDP-N-acetylmuramoylalanine--D-glutamate ligase.